We begin with the raw amino-acid sequence, 139 residues long: ATP synthase epsilon chain (139 aa).

This sequence belongs to the ATPase epsilon chain family. In terms of assembly, F-type ATPases have 2 components, CF(1) - the catalytic core - and CF(0) - the membrane proton channel. CF(1) has five subunits: alpha(3), beta(3), gamma(1), delta(1), epsilon(1). CF(0) has three main subunits: a, b and c.

The protein resides in the cell membrane. Its function is as follows. Produces ATP from ADP in the presence of a proton gradient across the membrane. The polypeptide is ATP synthase epsilon chain (Symbiobacterium thermophilum (strain DSM 24528 / JCM 14929 / IAM 14863 / T)).